The chain runs to 178 residues: Arginine repressor (178 aa).

Positions 1-21 are disordered; that stretch reads MSQAQENEHAGPAVPQTRTAR.

It belongs to the ArgR family.

The protein resides in the cytoplasm. The protein operates within amino-acid biosynthesis; L-arginine biosynthesis [regulation]. In terms of biological role, regulates arginine biosynthesis genes. In Streptomyces avermitilis (strain ATCC 31267 / DSM 46492 / JCM 5070 / NBRC 14893 / NCIMB 12804 / NRRL 8165 / MA-4680), this protein is Arginine repressor.